The chain runs to 250 residues: Ribonuclease PH (250 aa).

Phosphate contacts are provided by residues arginine 87 and 125–127; that span reads GTR.

It belongs to the RNase PH family. As to quaternary structure, homohexameric ring arranged as a trimer of dimers.

The catalysed reaction is tRNA(n+1) + phosphate = tRNA(n) + a ribonucleoside 5'-diphosphate. Functionally, phosphorolytic 3'-5' exoribonuclease that plays an important role in tRNA 3'-end maturation. Removes nucleotide residues following the 3'-CCA terminus of tRNAs; can also add nucleotides to the ends of RNA molecules by using nucleoside diphosphates as substrates, but this may not be physiologically important. Probably plays a role in initiation of 16S rRNA degradation (leading to ribosome degradation) during starvation. The sequence is that of Ribonuclease PH from Moorella thermoacetica (strain ATCC 39073 / JCM 9320).